Reading from the N-terminus, the 298-residue chain is HTH-type transcriptional regulator ArgP (298 aa).

Residues 4–60 form the HTH lysR-type domain; sequence LDYRWIEALDSVVSKGSFERAAEQLFISQSAVSQRIKQLEKYLAQPVLIREQPPRPT. The H-T-H motif DNA-binding region spans 21–40; the sequence is FERAAEQLFISQSAVSQRIK.

The protein belongs to the LysR transcriptional regulatory family. Homodimer.

Its function is as follows. Controls the transcription of genes involved in arginine and lysine metabolism. In Vibrio cholerae serotype O1 (strain ATCC 39315 / El Tor Inaba N16961), this protein is HTH-type transcriptional regulator ArgP.